A 65-amino-acid chain; its full sequence is Small ribosomal subunit protein eS27 (65 aa).

Cys-20, Cys-23, Cys-39, and Cys-42 together coordinate Zn(2+). A C4-type zinc finger spans residues 20 to 42 (CIDCGNEQIVFSHPATKVRCLVC).

The protein belongs to the eukaryotic ribosomal protein eS27 family. In terms of assembly, part of the 30S ribosomal subunit. Requires Zn(2+) as cofactor.

This chain is Small ribosomal subunit protein eS27, found in Thermococcus gammatolerans (strain DSM 15229 / JCM 11827 / EJ3).